The chain runs to 377 residues: Nuclear pore complex protein NUP54 (377 aa).

Residues 1 to 18 (MFGTPSSSPSFGTPSSTP) show a composition bias toward low complexity. Residues 1–104 (MFGTPSSSPS…NTAQQQQQTP (104 aa)) form a disordered region. 7 consecutive repeat copies span residues 2 to 3 (FG), 11 to 12 (FG), 20 to 21 (FG), 27 to 28 (FG), 36 to 37 (FG), 49 to 50 (FG), and 87 to 88 (FG). The segment at 2–88 (FGTPSSSPSF…FQQQPSSNFG (87 aa)) is 7 X 2 AA repeats of F-G. The segment covering 19 to 32 (AFGTSSPAFGTPSA) has biased composition (polar residues). A compositionally biased stretch (low complexity) spans 39–104 (PSNPSFSSGG…NTAQQQQQTP (66 aa)).

It belongs to the NUP54 family. In terms of assembly, part of the nuclear pore complex (NPC). The NPC has an eight-fold symmetrical structure comprising a central transport channel and two rings, the cytoplasmic and nuclear rings, to which eight filaments are attached. The cytoplasmic filaments have loose ends, while the nuclear filaments are joined in a distal ring, forming a nuclear basket. NPCs are highly dynamic in configuration and composition, and can be devided in 3 subcomplexes, the NUP62 subcomplex, the NUP107-160 subcomplex and the NUP93 subcomplex, containing approximately 30 different nucleoporin proteins.

It localises to the nucleus envelope. It is found in the nucleus. Its subcellular location is the nuclear pore complex. The protein is Nuclear pore complex protein NUP54 of Arabidopsis thaliana (Mouse-ear cress).